We begin with the raw amino-acid sequence, 1034 residues long: Sodium bicarbonate cotransporter 3 (1034 aa).

Disordered stretches follow at residues 1–31 (MEAD…KTSS) and 53–99 (HVPF…SQRV). The Extracellular segment spans residues 1 to 476 (MEADGAGEQM…DFKDALSLQC (476 aa)). Ser-57, Ser-60, Ser-89, and Ser-155 each carry phosphoserine. The span at 60-77 (SRRRHKHRGHKHHHRRRK) shows a compositional bias: basic residues. Basic and acidic residues predominate over residues 78-90 (DKDSDKEDGRESP). An N-linked (GlcNAc...) asparagine glycan is attached at Asn-176. 6 positions are modified to phosphoserine: Ser-238, Ser-250, Ser-260, Met-263, Ser-268, and Ser-271. The span at 250-260 (SAPGNLDNSKS) shows a compositional bias: polar residues. Positions 250 to 276 (SAPGNLDNSKSGEMKGNGSGGSRENST) are disordered. Asn-274 carries an N-linked (GlcNAc...) asparagine glycan. A phosphoserine mark is found at Ser-275 and Ser-424. A helical transmembrane segment spans residues 477–497 (LASILFLYCACMSPVITFGGL). The Cytoplasmic portion of the chain corresponds to 498-505 (LGEATEGR). The helical transmembrane segment at 506–526 (ISAIESLFGASLTGIAYSLFA) threads the bilayer. Over 527 to 563 (GQPLTILGSTGPVLVFEKILFKFCRDYHLSYLSLRTS) the chain is Extracellular. Residues 564–584 (IGLWTSFLCIVLVATDASSLV) form a helical membrane-spanning segment. Topologically, residues 585–593 (CYITRFTEE) are cytoplasmic. A helical membrane pass occupies residues 594–614 (AFAALICIIFIYEALEKLFHL). Residues 615 to 685 (GEIYAFNMHN…MFVGSACGPH (71 aa)) are Extracellular-facing. Cys-634 and Cys-636 are disulfide-bonded. 3 N-linked (GlcNAc...) asparagine glycosylation sites follow: Asn-644, Asn-654, and Asn-664. Cys-670 and Cys-682 are joined by a disulfide. A helical membrane pass occupies residues 686–706 (GPYVPDVLFWCVVLFFTTFFL). The Cytoplasmic segment spans residues 707–729 (SSFLKQFKTKGYFPTKVRSTISD). The helical transmembrane segment at 730 to 750 (FAVFLTIVIMVAIDYLVGIPS) threads the bilayer. Over 751-776 (PKLHVPEKFEPTDPSRGWIISPLGDN) the chain is Extracellular. Residues 777-797 (PWWTLLIAAVPALLCTILIFM) form a helical membrane-spanning segment. Topologically, residues 798-812 (DQQITAVIINRKEHK) are cytoplasmic. Residues 813–833 (LKFIPMPVLYGVFLYMGVSSL) form a helical membrane-spanning segment. Positions 815–915 (FIPMPVLYGV…MDLCFTKREL (101 aa)) are essential for cell membrane localization and transport activity. Over 834-876 (KGIQFFDRIKLFGMPAKHQPDLIYLRYVPLWKVHVFTVVQLTC) the chain is Extracellular. A helical membrane pass occupies residues 877–897 (LVLLWVIKASAAAVVFPMMVL). Over 898–1034 (ALVFVRKLMD…KKYMDAETSL (137 aa)) the chain is Cytoplasmic. A CA2-binding region spans residues 918-920 (LDD). A disordered region spans residues 926-946 (KKKKEDDKKKKEKEEAERMLQ). Position 951 is a phosphothreonine (Thr-951). Residues Ser-960 and Ser-1033 each carry the phosphoserine modification. The short motif at 1031 to 1034 (ETSL) is the PDZ-binding element.

This sequence belongs to the anion exchanger (TC 2.A.31) family. As to quaternary structure, forms a complex with ATP6V1B1 and NHERF1/EBP50. Interacts in a pH dependent-manner with CA2/carbonic anhydrase 2. Interacts with CFTR through NHERF1/EBP50. Interacts with USH1C. As to expression, expressed in the spiral ligament throughout the cochlea and in photoreceptors of the outer plexiform layer of the retina (at protein level).

Its subcellular location is the basolateral cell membrane. It localises to the apical cell membrane. The protein localises to the cell projection. The protein resides in the stereocilium. It is found in the cell membrane. It carries out the reaction hydrogencarbonate(in) + Na(+)(in) = hydrogencarbonate(out) + Na(+)(out). With respect to regulation, activity is inhibited by 4,4'-di-isothiocyanatostilbene-2,2'-disulfonic acid (DIDS - an inhibitor of several anion channels and transporters). Functionally, electroneutral sodium- and bicarbonate-dependent cotransporter with a Na(+):HCO3(-) 1:1 stoichiometry. Mediates the sodium-dependent bicarbonate transport important for pH recovery after acid load as well as for regulation of steady-state pH in the duodenum and vascular smooth muscle cells. Plays a key role in macrophage acidification, mediating bicarbonate import into the cytoplasm which is crucial for net acid extrusion and maintenance of cytoplasmic pH during phagocytosis. Provides cellular bicarbonate for de novo purine and pyrimidine synthesis and is a key mediator of de novo nucleotide synthesis downstream of mTORC1 signaling in proliferating cells. May be involved in maintaining locomotor activity, exploratory behavior, and hearing. The polypeptide is Sodium bicarbonate cotransporter 3 (Slc4a7) (Mus musculus (Mouse)).